A 166-amino-acid chain; its full sequence is MFHDPRFWTALAFVLFFVIFGRKLWVAITGHLDARADSVRHDLDEAARLRREAEQMLEDANREREKTLAETQAMLARSEAEAAGLAERARKDAEAAAARYEKMAQDRIHAAERSAIREIQDRAAQIAVAAARDVVSTRLTESPDIAATLIDKGIDSLPEALRRSAA.

The helical transmembrane segment at 7–29 threads the bilayer; sequence FWTALAFVLFFVIFGRKLWVAIT.

This sequence belongs to the ATPase B chain family. As to quaternary structure, F-type ATPases have 2 components, F(1) - the catalytic core - and F(0) - the membrane proton channel. F(1) has five subunits: alpha(3), beta(3), gamma(1), delta(1), epsilon(1). F(0) has three main subunits: a(1), b(2) and c(10-14). The alpha and beta chains form an alternating ring which encloses part of the gamma chain. F(1) is attached to F(0) by a central stalk formed by the gamma and epsilon chains, while a peripheral stalk is formed by the delta and b chains.

The protein resides in the cell inner membrane. F(1)F(0) ATP synthase produces ATP from ADP in the presence of a proton or sodium gradient. F-type ATPases consist of two structural domains, F(1) containing the extramembraneous catalytic core and F(0) containing the membrane proton channel, linked together by a central stalk and a peripheral stalk. During catalysis, ATP synthesis in the catalytic domain of F(1) is coupled via a rotary mechanism of the central stalk subunits to proton translocation. Its function is as follows. Component of the F(0) channel, it forms part of the peripheral stalk, linking F(1) to F(0). The chain is ATP synthase subunit b 1 from Gluconobacter oxydans (strain 621H) (Gluconobacter suboxydans).